A 419-amino-acid chain; its full sequence is Keratin, type II cytoskeletal I (419 aa).

The linker 1 stretch occupies residues 1–16; the sequence is KGSTKRANLDPLFEKY. One can recognise an IF rod domain in the interval 1 to 275; it reads KGSTKRANLD…YMLEGEEGRM (275 aa). The interval 17-108 is coil 1B; sequence ISDLKRYLDN…TLFAAELSQV (92 aa). Positions 109–132 are linker 12; sequence HDQVTDTSVVLTMDNNRDLNLDSI. A coil 2 region spans residues 133–271; the sequence is IKEVKCQYEQ…STYRYMLEGE (139 aa). Positions 272–419 are tail; the sequence is EGRMSGQISN…STTSTTKRSY (148 aa).

It belongs to the intermediate filament family. In terms of assembly, heterotetramer of two type I and two type II keratins.

In Xenopus laevis (African clawed frog), this protein is Keratin, type II cytoskeletal I.